Here is an 89-residue protein sequence, read N- to C-terminus: Large ribosomal subunit protein bL27 (89 aa).

The disordered stretch occupies residues 1-20 (MAHKKAGGSSRNGRDSAGKR).

This sequence belongs to the bacterial ribosomal protein bL27 family.

This chain is Large ribosomal subunit protein bL27, found in Rhodopseudomonas palustris (strain HaA2).